The chain runs to 209 residues: MTLKFSVERLVDSEKESEEADVEEQNNLKKLEEDEEDDELCEKSGKNEPLSQTLSYFDVLLPHVQMACSNPFISGIGASGSGDQNLNTGAGGSVWQHPWLELLQSTTAAQFGDVTAGLFLQPLRKNKRIRTAFSASQLIQLEKAFEGNHYVVGNERKQLAAKLSLTETQVKVWFQNRRTKHKRVRLEGSDPNAPMSNDEDDEDDKKSVS.

Basic and acidic residues predominate over residues 1-14; that stretch reads MTLKFSVERLVDSE. Disordered stretches follow at residues 1–46 and 181–209; these read MTLK…KSGK and HKRVRLEGSDPNAPMSNDEDDEDDKKSVS. The segment covering 15–24 has biased composition (acidic residues); sequence KESEEADVEE. A DNA-binding region (homeobox) is located at residues 126-185; it reads NKRIRTAFSASQLIQLEKAFEGNHYVVGNERKQLAAKLSLTETQVKVWFQNRRTKHKRVR.

It belongs to the EMX homeobox family. In terms of tissue distribution, in the anterior pharynx, expressed in the I3 interneuron, the NSM and M3 motor neuron pairs, the three m2 muscle cells and the three e2 epithelial cells (at protein level).

It is found in the nucleus. Functionally, required for activity of the M3 pharyngeal motor neuron. This chain is Homeobox protein ceh-2, found in Caenorhabditis elegans.